The sequence spans 210 residues: MRYPFWRLAVFLAACVAPVWWLYQAWIFALGPDPGKVLVEDFGLATLVMLLITMSMTPLQRLTGWPGWIVVRRQLGLWCFAYVVLHMTMYALFILGLDLGQLGVELVKRPYIIVGALAFLGLLALAVTSNRYSQRRLGARWKKLHRLIYVILGLGLLHMFWIVRADLKEWALYAGIGAFLLLLRIPMITRRIPRLGGSAGTGSKKVQNNG.

Helical transmembrane passes span 8–28, 37–57, 75–95, 110–130, 147–167, and 169–189; these read LAVFLAACVAPVWWLYQAWIF, VLVEDFGLATLVMLLITMSMT, LGLWCFAYVVLHMTMYALFIL, PYIIVGALAFLGLLALAVTSN, LIYVILGLGLLHMFWIVRADL, and EWALYAGIGAFLLLLRIPMIT.

The protein belongs to the MsrQ family. Heterodimer of a catalytic subunit (MsrP) and a heme-binding subunit (MsrQ). The cofactor is FMN. Heme b serves as cofactor.

It localises to the cell inner membrane. Part of the MsrPQ system that repairs oxidized periplasmic proteins containing methionine sulfoxide residues (Met-O), using respiratory chain electrons. Thus protects these proteins from oxidative-stress damage caused by reactive species of oxygen and chlorine generated by the host defense mechanisms. MsrPQ is essential for the maintenance of envelope integrity under bleach stress, rescuing a wide series of structurally unrelated periplasmic proteins from methionine oxidation. MsrQ provides electrons for reduction to the reductase catalytic subunit MsrP, using the quinone pool of the respiratory chain. The polypeptide is Protein-methionine-sulfoxide reductase heme-binding subunit MsrQ (Pseudomonas savastanoi pv. phaseolicola (strain 1448A / Race 6) (Pseudomonas syringae pv. phaseolicola (strain 1448A / Race 6))).